The sequence spans 419 residues: Hyaluronan synthase (419 aa).

The next 5 helical transmembrane spans lie at 8–28 (LIVL…MYLF), 33–53 (VGIY…LSFL), 318–338 (IVAL…VAIG), 345–365 (AIQL…IVAL), and 376–396 (PASF…LQPL).

The protein belongs to the NodC/HAS family. Mg(2+) serves as cofactor.

The protein localises to the cell membrane. The catalysed reaction is [hyaluronan](n) + UDP-N-acetyl-alpha-D-glucosamine = N-acetyl-beta-D-glucosaminyl-(1-&gt;4)-[hyaluronan](n) + UDP + H(+). It catalyses the reaction N-acetyl-beta-D-glucosaminyl-(1-&gt;4)-[hyaluronan](n) + UDP-alpha-D-glucuronate = [hyaluronan](n+1) + UDP + H(+). Its pathway is glycan biosynthesis; hyaluronan biosynthesis. Glycosaminoglycan synthesis. The hyaluronic acid capsule is involved in the pathogenicity of group A Streptococci; it may be the major virulence determinant. This is Hyaluronan synthase (hasA) from Streptococcus pyogenes serotype M6 (strain ATCC BAA-946 / MGAS10394).